We begin with the raw amino-acid sequence, 293 residues long: Ribosomal protein L11 methyltransferase (293 aa).

Thr145, Gly166, Asp188, and Asn230 together coordinate S-adenosyl-L-methionine.

It belongs to the methyltransferase superfamily. PrmA family.

It is found in the cytoplasm. The enzyme catalyses L-lysyl-[protein] + 3 S-adenosyl-L-methionine = N(6),N(6),N(6)-trimethyl-L-lysyl-[protein] + 3 S-adenosyl-L-homocysteine + 3 H(+). Functionally, methylates ribosomal protein L11. This chain is Ribosomal protein L11 methyltransferase, found in Shewanella denitrificans (strain OS217 / ATCC BAA-1090 / DSM 15013).